A 162-amino-acid polypeptide reads, in one-letter code: Blue copper protein 1b (162 aa).

The first 23 residues, M1–A23, serve as a signal peptide directing secretion. The Phytocyanin domain occupies T25–A125. H65 contacts Cu cation. N71 carries an N-linked (GlcNAc...) asparagine glycan. A disulfide bridge connects residues C78 and C112. Residues C106, H111, and M117 each coordinate Cu cation. Residues V142–A162 traverse the membrane as a helical segment.

It is found in the membrane. The chain is Blue copper protein 1b from Medicago truncatula (Barrel medic).